The following is a 78-amino-acid chain: Metallothionein-like protein type 2 (78 aa).

This sequence belongs to the metallothionein superfamily. Type 15 family.

Its function is as follows. Metallothioneins have a high content of cysteine residues that bind various heavy metals. The sequence is that of Metallothionein-like protein type 2 from Musa acuminata (Banana).